We begin with the raw amino-acid sequence, 468 residues long: Eukaryotic translation initiation factor 3 subunit M (468 aa).

The interval 40–61 (VAPLIEPLRQQEQSEEEPDRKQ) is disordered. The PCI domain maps to 206–377 (DLELAQTHVV…SEFLVHRATY (172 aa)). The segment at 419–468 (QAAAEEVGQGKSGDKGAKGGDRRRNPQQQQQSQPSQPQQAREVELVGGAE) is disordered. The span at 430–442 (SGDKGAKGGDRRR) shows a compositional bias: basic and acidic residues. The span at 444–457 (PQQQQQSQPSQPQQ) shows a compositional bias: low complexity.

Belongs to the eIF-3 subunit M family. In terms of assembly, component of the eukaryotic translation initiation factor 3 (eIF-3) complex.

It localises to the cytoplasm. In terms of biological role, component of the eukaryotic translation initiation factor 3 (eIF-3) complex, which is involved in protein synthesis of a specialized repertoire of mRNAs and, together with other initiation factors, stimulates binding of mRNA and methionyl-tRNAi to the 40S ribosome. The eIF-3 complex specifically targets and initiates translation of a subset of mRNAs involved in cell proliferation. In Aspergillus fumigatus (strain CBS 144.89 / FGSC A1163 / CEA10) (Neosartorya fumigata), this protein is Eukaryotic translation initiation factor 3 subunit M.